Reading from the N-terminus, the 675-residue chain is Rho guanine nucleotide exchange factor 37 (675 aa).

A disordered region spans residues 1-26; that stretch reads MAKHGADEPSSRSGSPDREGRASEDR. Positions 30-213 constitute a DH domain; it reads HQRLAVRELI…QDVNTNINEY (184 aa). One can recognise a BAR domain in the interval 254 to 455; it reads LKQEAGLIPR…LPHHHVPEPA (202 aa). 2 consecutive SH3 domains span residues 506–569 and 602–665; these read GPGK…LYHV and PTMN…RARS.

Its function is as follows. May act as a guanine nucleotide exchange factor (GEF). The polypeptide is Rho guanine nucleotide exchange factor 37 (ARHGEF37) (Homo sapiens (Human)).